Reading from the N-terminus, the 477-residue chain is Probable cytosolic Fe-S cluster assembly factor GM20417 (477 aa).

[4Fe-4S] cluster contacts are provided by C23, C68, C71, C74, C187, C243, C395, and C399.

It belongs to the NARF family.

Functionally, component of the cytosolic iron-sulfur (Fe/S) protein assembly machinery. Required for maturation of extramitochondrial Fe/S proteins. The protein is Probable cytosolic Fe-S cluster assembly factor GM20417 of Drosophila sechellia (Fruit fly).